A 610-amino-acid polypeptide reads, in one-letter code: Elongation factor 4 (610 aa).

The tr-type G domain maps to E11 to S193. GTP contacts are provided by residues D23–T28 and N140–D143.

The protein belongs to the TRAFAC class translation factor GTPase superfamily. Classic translation factor GTPase family. LepA subfamily.

It localises to the cell membrane. The catalysed reaction is GTP + H2O = GDP + phosphate + H(+). Functionally, required for accurate and efficient protein synthesis under certain stress conditions. May act as a fidelity factor of the translation reaction, by catalyzing a one-codon backward translocation of tRNAs on improperly translocated ribosomes. Back-translocation proceeds from a post-translocation (POST) complex to a pre-translocation (PRE) complex, thus giving elongation factor G a second chance to translocate the tRNAs correctly. Binds to ribosomes in a GTP-dependent manner. In Streptococcus equi subsp. equi (strain 4047), this protein is Elongation factor 4.